A 219-amino-acid polypeptide reads, in one-letter code: Octanoyltransferase (219 aa).

The BPL/LPL catalytic domain maps to 32–207 (ENSQDEIWIV…TLSQELGLDK (176 aa)). Residues 71–78 (RGGQVTYH), 138–140 (SLG), and 151–153 (GLA) each bind substrate. Cysteine 169 acts as the Acyl-thioester intermediate in catalysis.

It belongs to the LipB family.

Its subcellular location is the cytoplasm. It carries out the reaction octanoyl-[ACP] + L-lysyl-[protein] = N(6)-octanoyl-L-lysyl-[protein] + holo-[ACP] + H(+). It participates in protein modification; protein lipoylation via endogenous pathway; protein N(6)-(lipoyl)lysine from octanoyl-[acyl-carrier-protein]: step 1/2. In terms of biological role, catalyzes the transfer of endogenously produced octanoic acid from octanoyl-acyl-carrier-protein onto the lipoyl domains of lipoate-dependent enzymes. Lipoyl-ACP can also act as a substrate although octanoyl-ACP is likely to be the physiological substrate. The sequence is that of Octanoyltransferase from Shewanella pealeana (strain ATCC 700345 / ANG-SQ1).